Here is a 200-residue protein sequence, read N- to C-terminus: Dephospho-CoA kinase (200 aa).

The region spanning 4-200 (VIGLTGGIGS…QKYIKMSHLY (197 aa)) is the DPCK domain. 12–17 (GSGKTT) serves as a coordination point for ATP.

The protein belongs to the CoaE family.

The protein localises to the cytoplasm. It catalyses the reaction 3'-dephospho-CoA + ATP = ADP + CoA + H(+). It functions in the pathway cofactor biosynthesis; coenzyme A biosynthesis; CoA from (R)-pantothenate: step 5/5. In terms of biological role, catalyzes the phosphorylation of the 3'-hydroxyl group of dephosphocoenzyme A to form coenzyme A. The polypeptide is Dephospho-CoA kinase (Photobacterium profundum (strain SS9)).